A 203-amino-acid chain; its full sequence is MIGIIDYGMGNLRSVEKALKYVGYDAKITSDAKEIKNFEALILPGVGAFPDAIRVLIKTGMAEEIKIHIEKGKPFLGICLGMQLLFEKSFEGGKTEGLKIFKGNVVGLPKGNKIPHVGWNSLTIKKDTPFLKGIKNGDYVYFVHSYYVNGNEKDFEYAVTEYGIEIPAVIIKDNVFSCQFHPEKSGETGLKILKNFGEMIKCL.

One can recognise a Glutamine amidotransferase type-1 domain in the interval 1–203; the sequence is MIGIIDYGMG…KNFGEMIKCL (203 aa). Cysteine 79 (nucleophile) is an active-site residue. Residues histidine 181 and glutamate 183 contribute to the active site.

In terms of assembly, heterodimer of HisH and HisF.

It localises to the cytoplasm. It catalyses the reaction 5-[(5-phospho-1-deoxy-D-ribulos-1-ylimino)methylamino]-1-(5-phospho-beta-D-ribosyl)imidazole-4-carboxamide + L-glutamine = D-erythro-1-(imidazol-4-yl)glycerol 3-phosphate + 5-amino-1-(5-phospho-beta-D-ribosyl)imidazole-4-carboxamide + L-glutamate + H(+). It carries out the reaction L-glutamine + H2O = L-glutamate + NH4(+). The protein operates within amino-acid biosynthesis; L-histidine biosynthesis; L-histidine from 5-phospho-alpha-D-ribose 1-diphosphate: step 5/9. Functionally, IGPS catalyzes the conversion of PRFAR and glutamine to IGP, AICAR and glutamate. The HisH subunit catalyzes the hydrolysis of glutamine to glutamate and ammonia as part of the synthesis of IGP and AICAR. The resulting ammonia molecule is channeled to the active site of HisF. The protein is Imidazole glycerol phosphate synthase subunit HisH of Caldanaerobacter subterraneus subsp. tengcongensis (strain DSM 15242 / JCM 11007 / NBRC 100824 / MB4) (Thermoanaerobacter tengcongensis).